The following is a 196-amino-acid chain: Flagellin B2 (196 aa).

The propeptide occupies 1–12 (MFEFITDEDERG).

Belongs to the archaeal flagellin family. Glycosylated.

It is found in the archaeal flagellum. Its function is as follows. Flagellin is the subunit protein which polymerizes to form the filaments of archaeal flagella. In Halobacterium salinarum (strain ATCC 700922 / JCM 11081 / NRC-1) (Halobacterium halobium), this protein is Flagellin B2 (flaB2).